The following is a 269-amino-acid chain: Indole-3-glycerol phosphate synthase (269 aa).

Belongs to the TrpC family.

It carries out the reaction 1-(2-carboxyphenylamino)-1-deoxy-D-ribulose 5-phosphate + H(+) = (1S,2R)-1-C-(indol-3-yl)glycerol 3-phosphate + CO2 + H2O. It participates in amino-acid biosynthesis; L-tryptophan biosynthesis; L-tryptophan from chorismate: step 4/5. The protein is Indole-3-glycerol phosphate synthase of Rhodococcus opacus (strain B4).